The chain runs to 190 residues: MDTEYEQVNKPWNELYKEATLGNKLTVNVGMEDVEVPLLPSNFLTKVRVSLSGGYITVRRVRIKIIPLVSRKAGVSGKLYLRDISDTTGRKLHCTELLDLGKEIRLTMQHLDFSVSARSDVPIVFGFEDLVSPYLEGRELFSVSLRWQFGLSAQCYSLPPAKWKVMYQEDALKALKPSKIKKASKTDSSV.

Belongs to the tombusvirus/aureusvirus movement protein p22 family.

It is found in the host membrane. Transports viral genome to neighboring plant cells directly through plasmosdesmata, without any budding. The movement protein allows efficient cell to cell propagation, by bypassing the host cell wall barrier. This is Movement protein from Cucumber necrosis virus (CNV).